The sequence spans 1036 residues: Presequence protease, mitochondrial (1036 aa).

A mitochondrion-targeting transit peptide spans 1–15 (MWRFSGRRGLCAVQR). Residue His-104 participates in Zn(2+) binding. Glu-107 (proton acceptor) is an active-site residue. The Zn(2+) site is built by His-108 and Glu-205. Cys-119 and Cys-556 are oxidised to a cystine. Lys-759 is subject to N6-acetyllysine. Residue Lys-770 is modified to N6-acetyllysine; alternate. Residue Lys-770 is modified to N6-succinyllysine; alternate. The segment at 806 to 833 (SKKERKPVRPHIVEKPTPSGPSGAAHVS) is disordered. Lys-848 carries the N6-succinyllysine modification. An N6-acetyllysine modification is found at Lys-883. Lys-945 carries the N6-succinyllysine modification.

It belongs to the peptidase M16 family. PreP subfamily. As to quaternary structure, monomer and homodimer; homodimerization is induced by binding of the substrate. It depends on Zn(2+) as a cofactor. In terms of processing, a disulfide bond locks the enzyme in the closed conformation preventing substrate entry into the catalytic chamber.

It is found in the mitochondrion matrix. Mainly exists in a closed and catalytically competent conformation but a closed-to-open switch allows substrate entry into the catalytic chamber. Substrate binding induces closure and dimerization. A disulfide bond may lock the enzyme in a closed conformation preventing substrate entry into the catalytic chamber, participating in redox regulation of the enzyme. Inhibited by metal-chelating agents. Inhibited by nickel and zinc excess, and slightly activated by manganese. Functionally, metalloendopeptidase of the mitochondrial matrix that functions in peptide cleavage and degradation rather than in protein processing. Has an ATP-independent activity. Specifically cleaves peptides in the range of 5 to 65 residues. Shows a preference for cleavage after small polar residues and before basic residues, but without any positional preference. Degrades the transit peptides of mitochondrial proteins after their cleavage. Also degrades other unstructured peptides. It is also able to degrade amyloid-beta protein 40, one of the peptides produced by APP processing, when it accumulates in mitochondrion. It is a highly efficient protease, at least toward amyloid-beta protein 40. Cleaves that peptide at a specific position and is probably not processive, releasing digested peptides intermediates that can be further cleaved subsequently. It is also able to degrade amyloid-beta protein 42. This is Presequence protease, mitochondrial from Mus musculus (Mouse).